Consider the following 154-residue polypeptide: Cyanate hydratase (154 aa).

Catalysis depends on residues arginine 100, glutamate 103, and serine 126.

Belongs to the cyanase family.

The catalysed reaction is cyanate + hydrogencarbonate + 3 H(+) = NH4(+) + 2 CO2. Catalyzes the reaction of cyanate with bicarbonate to produce ammonia and carbon dioxide. This is Cyanate hydratase from Aspergillus fumigatus (strain ATCC MYA-4609 / CBS 101355 / FGSC A1100 / Af293) (Neosartorya fumigata).